A 232-amino-acid chain; its full sequence is MKTFVICSGGLDSVSLAHKVAVEKTLAGLISFDYGQRHKKELDFARACAQRLDVRHMIIDIRAVGEGLAGSALTDEIDVPNGHYAEDTMRITVVPNRNAIMLAIAFGVAAAQNADAVATAVHGGDHFIYPDCRPGFIEAFQAMQAQALDGYAKIALYAPYVNLSKANIVSDGVRHRTPFEATWSCYKGGKHHCGRCGTCVERREAFDLAGVTDPTTYEDAAFWREAVARKAG.

7 to 17 is a binding site for ATP; sequence CSGGLDSVSLA. Zn(2+) contacts are provided by Cys185, Cys193, Cys196, and Cys199.

The protein belongs to the QueC family. It depends on Zn(2+) as a cofactor.

It catalyses the reaction 7-carboxy-7-deazaguanine + NH4(+) + ATP = 7-cyano-7-deazaguanine + ADP + phosphate + H2O + H(+). The protein operates within purine metabolism; 7-cyano-7-deazaguanine biosynthesis. Catalyzes the ATP-dependent conversion of 7-carboxy-7-deazaguanine (CDG) to 7-cyano-7-deazaguanine (preQ(0)). The chain is 7-cyano-7-deazaguanine synthase from Chelativorans sp. (strain BNC1).